A 362-amino-acid polypeptide reads, in one-letter code: MGVGVLEKLSRKTGVIVGDDVLRLFEHAQQNNYAIPAVNVTSSSTVVASLEAARDQNCPIVLQLSQGGAAYFAGKGVSNDGQQASIAGGIAAAHYIRSLAPAYGIPVVLHTDHCAKKLLPWLDGLLDEDERYFKLHGEPLFSSHMIDLSEEPVDYNIQTTAAYLKRAAPMKQWLEMEIGITGGEEDGVNNEDVDNNSLYTQPEDILAIHKALSPISPYFSIAAGFGNVHGVYKPGNVKLHPELLKKHQAYVKEKIGSNKDKPVFFVFHGGSGSSKEEYKEAISYGVVKVNVDTDMQFAYMSGIRDYILKKKDYLMTAVGNPEGEDKPNKKSFDPRVWVREGEKTMSQRVKVALEDFNTAGQL.

D-glyceraldehyde 3-phosphate is bound at residue Ser65. Asp112 functions as the Proton donor in the catalytic mechanism. 4 residues coordinate Zn(2+): His113, Asp147, Glu177, and His229. A dihydroxyacetone phosphate-binding site is contributed by Gly230. Zn(2+) is bound at residue His268. Residues 269–271 (GGS) and 290–293 (NVDT) each bind dihydroxyacetone phosphate.

This sequence belongs to the class II fructose-bisphosphate aldolase family. As to quaternary structure, homodimer. Zn(2+) is required as a cofactor.

It catalyses the reaction beta-D-fructose 1,6-bisphosphate = D-glyceraldehyde 3-phosphate + dihydroxyacetone phosphate. Its pathway is carbohydrate degradation; glycolysis; D-glyceraldehyde 3-phosphate and glycerone phosphate from D-glucose: step 4/4. In terms of biological role, catalyzes the aldol condensation of dihydroxyacetone phosphate (DHAP or glycerone-phosphate) with glyceraldehyde 3-phosphate (G3P) to form fructose 1,6-bisphosphate (FBP) in gluconeogenesis and the reverse reaction in glycolysis. This chain is Fructose-bisphosphate aldolase (fbaA), found in Aspergillus oryzae (strain ATCC 42149 / RIB 40) (Yellow koji mold).